Here is a 782-residue protein sequence, read N- to C-terminus: General transcription and DNA repair factor IIH helicase/translocase subunit XPB (782 aa).

The span at 1-11 (MGKRDRADRDK) shows a compositional bias: basic and acidic residues. Disordered stretches follow at residues 1 to 51 (MGKR…ESGT) and 218 to 241 (SAISKTAESSGGPSTSRVTDPQGK). A Nuclear localization signal motif is present at residues 6–18 (RADRDKKKSRKRH). A compositionally biased stretch (acidic residues) spans 21–30 (DEEDDEEDAP). A compositionally biased stretch (polar residues) spans 218 to 236 (SAISKTAESSGGPSTSRVT). In terms of domain architecture, Helicase ATP-binding spans 327–488 (MFGNGRARSG…DLNFLIGPKL (162 aa)). Residue 340 to 347 (LPCGAGKS) coordinates ATP. Residues 441 to 444 (DEVH) carry the DEVH box motif. A Helicase C-terminal domain is found at 542 to 702 (RACQFLIKFH…LAGMEEEDLA (161 aa)). Residue Ser-686 is modified to Phosphoserine. Ser-751 carries the post-translational modification Phosphoserine; by CK2.

Belongs to the helicase family. RAD25/XPB subfamily. Component of the 7-subunit TFIIH core complex composed of XPB/ERCC3, XPD/ERCC2, GTF2H1, GTF2H2, GTF2H3, GTF2H4 and GTF2H5, which is active in NER. The core complex associates with the 3-subunit CDK-activating kinase (CAK) module composed of CCNH/cyclin H, CDK7 and MNAT1 to form the 10-subunit holoenzyme (holo-TFIIH) active in transcription. Interacts with PUF60. Interacts with ATF7IP. Interacts with KAT2A; leading to KAT2A recruitment to promoters and acetylation of histones. Part of TBP-based Pol II pre-initiation complex (PIC), in which Pol II core assembles with general transcription factors and other specific initiation factors including GTF2E1, GTF2E2, GTF2F1, GTF2F2, TCEA1, ERCC2, ERCC3, GTF2H2, GTF2H3, GTF2H4, GTF2H5, GTF2A1, GTF2A2, GTF2B and TBP; this large multi-subunit PIC complex mediates DNA unwinding and targets Pol II core to the transcription start site where the first phosphodiester bond forms. In terms of processing, phosphorylation on Ser-751 by CK2 controls the 5'-excision activity of ERCC1-XPF endonuclease; phosphorylated protein inhibits the excision activity and thus NER. Dephosphorylation reactivates the 5'-excision step. Phosphorylation has no effect on transcription or the 3'-5' helicase activity.

Its subcellular location is the nucleus. It catalyses the reaction Couples ATP hydrolysis with the unwinding of duplex DNA by translocating in the 3'-5' direction.. It carries out the reaction ATP + H2O = ADP + phosphate + H(+). Its activity is regulated as follows. Phosphorylation on Ser-751 by CK2 controls the 5'-excision activity of ERCC1-XPF endonuclease; phosphorylated protein inhibits the excision activity and thus NER. ATPase activity is stimulated by TFIIH subunit p52 (GTF2H4). DNA translocase activity by this subunit in TFIIH is stimulated by XPA, ERCC5/XPG and XFP plus ERCC1. Its function is as follows. ATP-dependent 3'-5' DNA helicase/translocase; binds dsDNA rather than ssDNA, unzipping it in a translocase rather than classical helicase activity. Component of the general transcription and DNA repair factor IIH (TFIIH) core complex. When complexed to CDK-activating kinase (CAK), involved in RNA transcription by RNA polymerase II. The ATPase activity of XPB/ERCC3, but not its helicase activity, is required for DNA opening; it may wrap around the damaged DNA wedging it open, causing localized melting and twisting that allows XPD/ERCC2 helicase to anchor. The ATP-dependent helicase activity of XPB/ERCC3 may be required for promoter escape. Also involved in transcription-coupled nucleotide excision repair (NER) of damaged DNA. In NER, TFIIH acts by opening DNA around the lesion to allow the excision of the damaged oligonucleotide and its replacement by a new DNA fragment. The structure of the TFIIH transcription complex differs from the NER-TFIIH complex; large movements by XPD/ERCC2 and XPB/ERCC3 are stabilized by XPA. In Pongo abelii (Sumatran orangutan), this protein is General transcription and DNA repair factor IIH helicase/translocase subunit XPB (ERCC3).